Reading from the N-terminus, the 3856-residue chain is Hybrid PKS-NRPS synthetase traA (3856 aa).

One can recognise a Ketosynthase family 3 (KS3) domain in the interval 6-438 (PEPIAIVGSG…GTNGHAILEE (433 aa)). Active-site for beta-ketoacyl synthase activity residues include Cys-179, His-318, and His-358. Residues 554–885 (IFTGQGAQWA…FSDALGFVWT (332 aa)) are malonyl-CoA:ACP transacylase (MAT) domain. Residues 943-1081 (HELLGVPSPN…GKVTVIYGTP (139 aa)) are N-terminal hotdog fold. The interval 943–1247 (HELLGVPSPN…LSMKPFSPAT (305 aa)) is dehydratase (DH) domain. A PKS/mFAS DH domain is found at 943 to 1249 (HELLGVPSPN…MKPFSPATAD (307 aa)). The active-site Proton acceptor; for dehydratase activity is the His-975. The tract at residues 1096-1249 (MVDIQAEQFY…MKPFSPATAD (154 aa)) is C-terminal hotdog fold. Catalysis depends on Asp-1156, which acts as the Proton donor; for dehydratase activity. The segment at 1290–1456 (LACVAQQIVH…RKAGFSGIDS (167 aa)) is methyltransferase (MT) domain. The interval 1984–2158 (TYVLVGLSGR…ATSLDIGSIV (175 aa)) is ketoreductase (KR) domain. The Carrier 1 domain occupies 2266–2347 (ADALEILKEL…TLCQQALEKL (82 aa)). Ser-2307 bears the O-(pantetheine 4'-phosphoryl)serine mark. Positions 2351–2422 (ILPNVESGGP…SSTPATVLSN (72 aa)) are disordered. Low complexity-rich tracts occupy residues 2357–2369 (SGGP…SKPT) and 2399–2418 (TTSP…TPAT). A condensation (C) domain region spans residues 2446-2884 (VKTELVSFQQ…FALFSDKELK (439 aa)). The tract at residues 2910-3310 (QIAKENDDKV…GAMVFHNRIA (401 aa)) is adenylation (A) domain. Residues 3403–3429 (SKTDRKALKELPLPQRSNHDTGDNTES) form a disordered region. One can recognise a Carrier 2 domain in the interval 3428–3507 (ESLTETMLEL…DMTQKIEESL (80 aa)). Residue Ser-3467 is modified to O-(pantetheine 4'-phosphoryl)serine. Positions 3544 to 3768 (VTGSGGFLGK…EMTPIHSAAS (225 aa)) are reductase (R) domain.

It in the C-terminal section; belongs to the NRP synthetase family.

It participates in secondary metabolite biosynthesis. In terms of biological role, hybrid PKS-NRPS synthetase; part of the tra gene cluster that produces terrestric acid. The clavatol biosynthesis cluster cla and the terrestric acid cluster tra are both involved in the production of peniphenones and penilactones. The non-reducing PKS claF is responsible for the formation of clavatol from successive condensations of 3 malonyl-CoA units, presumably with a simple acetyl-CoA starter unit, and 2 methylation steps. The esterase claE probably collaborates with claF by catalyzing the hydrolysis of ACP-bound acyl intermediates to free the ACP from stalled intermediates. The clavatol oxidase claD then converts clavatol to hydroxyclavatol. Spontaneous dehydration of hydroxyclavatol leads to the accumulation of the highly active ortho-quinone methide. On the other hand, the PKS-NRPS hybrid traA is involved in the formation of crustosic acid, with the help of traB and traD. The polyketide synthase module (PKS) of traA is responsible for the synthesis of the polyketide backbone via the condensation of an acetyl-CoA starter unit with 3 malonyl-CoA units. The downstream nonribosomal peptide synthetase (NRPS) module then amidates the carboxyl end of the polyketide with L-malic acid. Because traA lacks a designated enoylreductase (ER) domain, the required activity is provided the enoyl reductase traG. Crustosic acid undergoes decarboxylation and isomerization to the terrestric acid, catalyzed by the 2-oxoglutarate-dependent dioxygenase traH. Both acids are further converted to the 2 gamma-butyrolactones (R)-5-methyltetronic acid and (S)-5-carboxylmethyltetronic acid, with involvement of the cytochrome P450 monooxygenase claJ. Spontaneous addition of the methide to these gamma-butyrolactones leads to peniphenone D and penilactone D, which undergo again stereospecific attacking by methide to give penilactones A and B. This chain is Hybrid PKS-NRPS synthetase traA, found in Penicillium crustosum (Blue mold fungus).